The sequence spans 27 residues: Secretin (27 aa).

Leu-27 bears the Leucine amide mark.

The protein belongs to the glucagon family.

It localises to the secreted. Hormone involved in different processes, such as regulation of the pH of the duodenal content, food intake and water homeostasis. Exerts its biological effects by binding to secretin receptor (SCTR), a G-protein coupled receptor expressed in the basolateral domain of several cells. Acts as a key gastrointestinal hormone by regulating the pH of the duodenal content. Secreted by S cells of the duodenum in the crypts of Lieberkuehn and regulates the pH of the duodenum by (1) inhibiting the secretion of gastric acid from the parietal cells of the stomach and (2) stimulating the production of bicarbonate (NaHCO(3)) from the ductal cells of the pancreas. Production of bicarbonate is essential to neutralize the pH and ensure no damage is done to the small intestine by the gastric acid. In addition to regulating the pH of the duodenal content, plays a central role in diet induced thermogenesis: acts as a non-sympathetic brown fat (BAT) activator mediating prandial thermogenesis, which consequentially induces satiation. Mechanistically, secretin released by the gut after a meal binds to secretin receptor (SCTR) in brown adipocytes, activating brown fat thermogenesis by stimulating lipolysis, which is sensed in the brain and promotes satiation. Also able to stimulate lipolysis in white adipocytes. Also plays an important role in cellular osmoregulation: released into the systemic circulation in response to hyperosmolality and acts at different levels in the hypothalamus, pituitary and kidney to regulate water homeostasis. Also plays a role in the central nervous system, possibly by acting as a neuropeptide hormone: required for hippocampal synaptic function and neural progenitor cells maintenance. The sequence is that of Secretin from Oryctolagus cuniculus (Rabbit).